Here is a 253-residue protein sequence, read N- to C-terminus: Ubiquinone/menaquinone biosynthesis C-methyltransferase UbiE (253 aa).

S-adenosyl-L-methionine is bound by residues threonine 76, aspartate 97, 125–126, and serine 142; that span reads NA.

The protein belongs to the class I-like SAM-binding methyltransferase superfamily. MenG/UbiE family.

It catalyses the reaction a 2-demethylmenaquinol + S-adenosyl-L-methionine = a menaquinol + S-adenosyl-L-homocysteine + H(+). The enzyme catalyses a 2-methoxy-6-(all-trans-polyprenyl)benzene-1,4-diol + S-adenosyl-L-methionine = a 5-methoxy-2-methyl-3-(all-trans-polyprenyl)benzene-1,4-diol + S-adenosyl-L-homocysteine + H(+). The protein operates within quinol/quinone metabolism; menaquinone biosynthesis; menaquinol from 1,4-dihydroxy-2-naphthoate: step 2/2. It participates in cofactor biosynthesis; ubiquinone biosynthesis. In terms of biological role, methyltransferase required for the conversion of demethylmenaquinol (DMKH2) to menaquinol (MKH2) and the conversion of 2-polyprenyl-6-methoxy-1,4-benzoquinol (DDMQH2) to 2-polyprenyl-3-methyl-6-methoxy-1,4-benzoquinol (DMQH2). The sequence is that of Ubiquinone/menaquinone biosynthesis C-methyltransferase UbiE from Xanthomonas oryzae pv. oryzae (strain MAFF 311018).